The following is a 206-amino-acid chain: Uracil phosphoribosyltransferase (206 aa).

Residues Arg76, Arg101, and 128-136 each bind 5-phospho-alpha-D-ribose 1-diphosphate; that span reads DPMLATGTT. Uracil is bound by residues Ile191 and 196-198; that span reads GDA. A 5-phospho-alpha-D-ribose 1-diphosphate-binding site is contributed by Asp197.

Belongs to the UPRTase family. It depends on Mg(2+) as a cofactor.

It carries out the reaction UMP + diphosphate = 5-phospho-alpha-D-ribose 1-diphosphate + uracil. Its pathway is pyrimidine metabolism; UMP biosynthesis via salvage pathway; UMP from uracil: step 1/1. Allosterically activated by GTP. Functionally, catalyzes the conversion of uracil and 5-phospho-alpha-D-ribose 1-diphosphate (PRPP) to UMP and diphosphate. This Mycoplasma genitalium (strain ATCC 33530 / DSM 19775 / NCTC 10195 / G37) (Mycoplasmoides genitalium) protein is Uracil phosphoribosyltransferase.